A 684-amino-acid chain; its full sequence is MSAQDFLVELGTEELPPKTLVSLADAFLAGIEKGLSGAGLTYSAKQVYAAPRRLAVLITALATQQPDRSVNLDGPPRQAAFDADGNPTQAALGFAKKCGVDLSEIDQSGPKLRYSQTILGKPTTSLLPTIVEDSLNDLPIAKRMRWGARKEEFVRPTQWLVMLFGDQVVDCTILAQSAGRHSRGHRFHHPQDVRISSPAGYLSDLRAAHVLADFNERRQIISKRVDELATQQEGTAIVPPSLLDEVAGLVEWPVPLVCSFEERFLEVPQEALITTMQDNQKYFCLLDAEGKLLPRFITVANIESKDPAQIVAGNEKVVRPRLTDAEFFFKQDKKQKLETFNDRLKNVVFQAQLGSVFDKAERVSKLAAYIAPRIGGDAQRAARAGLLSKCDLSSEMVGEFPEMQGIAGYYYAKADGEPEDVALALNEQYMPRGAGAELPTTLTGAAVAIADKLDTLVGIFGIGMLPTGSKDPYALRRAALGILRILIEKKLDLNLVETVKFAVTQFGAKIKPAGLAEQVLDFIFDRLRARYEDEGVDVAVYLSVRALQPASALDFDQRVQAVQAFRKLPQAAALAAVNKRVSNLLSKAEGSIAQTVEPKYFDNANEFSLYSAIQQADHAVQPMAAERQYSESLARLAMLREPVDAFFEAVMVNAEDANVRANRYALLSRLRGLFLGVADISLLG.

It belongs to the class-II aminoacyl-tRNA synthetase family. As to quaternary structure, tetramer of two alpha and two beta subunits.

It is found in the cytoplasm. The catalysed reaction is tRNA(Gly) + glycine + ATP = glycyl-tRNA(Gly) + AMP + diphosphate. The sequence is that of Glycine--tRNA ligase beta subunit from Pseudomonas savastanoi pv. phaseolicola (strain 1448A / Race 6) (Pseudomonas syringae pv. phaseolicola (strain 1448A / Race 6)).